The primary structure comprises 271 residues: 4,5-DOPA dioxygenase extradiol (271 aa).

Positions 22, 57, 177, and 234 each coordinate Zn(2+).

This sequence belongs to the DODA-type extradiol aromatic ring-opening dioxygenase family. As to quaternary structure, monomer. Requires Zn(2+) as cofactor.

It is found in the cytoplasm. It carries out the reaction L-dopa + O2 = 4-(L-alanin-3-yl)-2-hydroxy-cis,cis-muconate 6-semialdehyde + H(+). Its function is as follows. In vitro, opens the cyclic ring of dihydroxy-phenylalanine (DOPA) between carbons 4 and 5, thus producing an unstable seco-DOPA that rearranges nonenzymatically to betalamic acid. The physiological substrate is unknown. The protein is 4,5-DOPA dioxygenase extradiol (ygiD) of Escherichia coli (strain K12).